The following is a 209-amino-acid chain: NADH-ubiquinone oxidoreductase subunit 9 (209 aa).

The protein belongs to the complex I 30 kDa subunit family. Complex I is composed of about 45 different subunits.

The protein resides in the mitochondrion inner membrane. The enzyme catalyses a ubiquinone + NADH + 5 H(+)(in) = a ubiquinol + NAD(+) + 4 H(+)(out). In terms of biological role, core subunit of the mitochondrial membrane respiratory chain NADH dehydrogenase (Complex I) that is believed to belong to the minimal assembly required for catalysis. Complex I functions in the transfer of electrons from NADH to the respiratory chain. The immediate electron acceptor for the enzyme is believed to be ubiquinone. This chain is NADH-ubiquinone oxidoreductase subunit 9 (nad9), found in Dictyostelium discoideum (Social amoeba).